We begin with the raw amino-acid sequence, 356 residues long: MNAARTGYRVFSANSTAACTELAKRITERLGAELGKSVVYQETNGETRVEIKESVRGQDIFIIQTIPRDVNTAVMELLIMAYALKTACARNIIGVIPYFPYSKQSKMRKRGSIVCKLLASMLAKAGLTHIITMDLHQKEIQGFFSFPVDNLRASPFLLQYIQEEIPNYRNAVIVAKSPDAAKRAQSYAERLRLGLAVIHGEAQCTELDMDDGRHSPPMVKNATVHPGLELPLMMAKEKPPITVVGDVGGRIAIIVDDIIDDVESFVAAAEILKERGAYKIYVMATHGILSAEAPRLIEESSVDEVVVTNTVPHEVQKLQCPKIKTVDISLILSEAIRRIHNGESMAYLFRNITVDD.

The residue at position 1 (Met1) is an N-acetylmethionine. Asn2 carries the N-acetylproline modification. A phosphoserine mark is found at Ser177 and Ser215.

The protein belongs to the ribose-phosphate pyrophosphokinase family. As to quaternary structure, binds to PRPS1 and PRPS2. Ubiquitous.

In terms of biological role, seems to play a negative regulatory role in 5-phosphoribose 1-diphosphate synthesis. In Homo sapiens (Human), this protein is Phosphoribosyl pyrophosphate synthase-associated protein 1 (PRPSAP1).